The sequence spans 354 residues: S-adenosylmethionine:tRNA ribosyltransferase-isomerase (354 aa).

This sequence belongs to the QueA family. In terms of assembly, monomer.

The protein localises to the cytoplasm. The catalysed reaction is 7-aminomethyl-7-carbaguanosine(34) in tRNA + S-adenosyl-L-methionine = epoxyqueuosine(34) in tRNA + adenine + L-methionine + 2 H(+). It functions in the pathway tRNA modification; tRNA-queuosine biosynthesis. Functionally, transfers and isomerizes the ribose moiety from AdoMet to the 7-aminomethyl group of 7-deazaguanine (preQ1-tRNA) to give epoxyqueuosine (oQ-tRNA). In Salmonella typhi, this protein is S-adenosylmethionine:tRNA ribosyltransferase-isomerase.